The chain runs to 255 residues: Kallikrein-4 (255 aa).

Residues 1 to 25 (MMVTARTPWGWFLGCLILEVTGASA) form the signal peptide. The propeptide occupies 26-31 (SSVSSR). A Peptidase S1 domain is found at 32–253 (IIQGQDCSPH…FTNWIQTIIQ (222 aa)). Histidine 41 contributes to the Zn(2+) binding site. Cysteine 57 and cysteine 73 are joined by a disulfide. The active-site Charge relay system is histidine 72. Zn(2+) is bound at residue glutamate 92. Aspartate 117 (charge relay system) is an active-site residue. 2 N-linked (GlcNAc...) asparagine glycosylation sites follow: asparagine 124 and asparagine 170. Intrachain disulfides connect cysteine 149–cysteine 214, cysteine 179–cysteine 193, and cysteine 204–cysteine 229. Serine 208 acts as the Charge relay system in catalysis.

The protein belongs to the peptidase S1 family. Kallikrein subfamily. N-glycosylated. The N-glycan structures are of complex diantennary or triantennary type, which may be further modified with up to 2 sialic acid residues.

The protein localises to the secreted. Its function is as follows. Has a major role in enamel formation. Required during the maturation stage of tooth development for clearance of enamel proteins and normal structural patterning of the crystalline matrix. This chain is Kallikrein-4, found in Mus musculus (Mouse).